The sequence spans 50 residues: Putative protein HokF (50 aa).

A helical transmembrane segment spans residues 5 to 25 (YALVAVIVLCLTVPGFTLLVG).

It belongs to the Hok/Gef family.

Its subcellular location is the cell inner membrane. Functionally, toxic component of a type I toxin-antitoxin (TA) system. When overexpressed kills cells within minutes; causes collapse of the transmembrane potential and arrest of respiration. Its toxic effect is probably neutralized by an antisense antitoxin Sok RNA. The chain is Putative protein HokF (hokF) from Escherichia coli O157:H7.